Here is a 149-residue protein sequence, read N- to C-terminus: 3-dehydroquinate dehydratase (149 aa).

Catalysis depends on tyrosine 21, which acts as the Proton acceptor. Asparagine 73, histidine 79, and aspartate 86 together coordinate substrate. The active-site Proton donor is the histidine 99. Substrate is bound by residues 100-101 (LT) and arginine 110.

The protein belongs to the type-II 3-dehydroquinase family. As to quaternary structure, homododecamer.

It carries out the reaction 3-dehydroquinate = 3-dehydroshikimate + H2O. It functions in the pathway metabolic intermediate biosynthesis; chorismate biosynthesis; chorismate from D-erythrose 4-phosphate and phosphoenolpyruvate: step 3/7. Its function is as follows. Catalyzes a trans-dehydration via an enolate intermediate. The polypeptide is 3-dehydroquinate dehydratase (Thermus thermophilus (strain ATCC BAA-163 / DSM 7039 / HB27)).